Reading from the N-terminus, the 465-residue chain is Sensor histidine kinase ZraS (465 aa).

Residues 1–14 (MRFMQRSKDSLAKW) are Cytoplasmic-facing. Residues 15–35 (LSAILPVVIVGLVGLFAVTVI) form a helical membrane-spanning segment. Topologically, residues 36–201 (RDYGRASEAD…ATQSGEKRNT (166 aa)) are periplasmic. Residues 202–222 (LIILFALATVLLASVLSFFWY) form a helical membrane-spanning segment. Over 223-465 (RRYLRSRQLL…VNITRKDPQG (243 aa)) the chain is Cytoplasmic. One can recognise a Histidine kinase domain in the interval 251–458 (GVAHEIRNPL…TFTLWLPVNI (208 aa)). At His254 the chain carries Phosphohistidine; by autocatalysis.

Post-translationally, autophosphorylated.

Its subcellular location is the cell inner membrane. The catalysed reaction is ATP + protein L-histidine = ADP + protein N-phospho-L-histidine.. Its activity is regulated as follows. Activity of the ZraS/ZraR two-component system is repressed by the zinc-bound form of ZraP, which probably interacts with the periplasmic region of ZraS. Functionally, part of the Zra signaling pathway, an envelope stress response (ESR) system composed of the periplasmic accessory protein ZraP, the histidine kinase ZraS and the transcriptional regulator ZraR. The ZraPSR system contributes to antibiotic resistance and is important for membrane integrity in the presence of membrane-targeting biocides. ZraS is a member of the two-component regulatory system ZraS/ZraR. Functions as a membrane-associated sensor kinase that phosphorylates ZraR in response to high concentrations of Zn(2+) or Pb(2+) in the medium. Binds one zinc molecule with high affinity via its periplasmic domain, inducing a conformational change that is transmitted to the histidine kinase domain and leads to the activation of ZraR. The system has no direct role in zinc or copper resistance. This chain is Sensor histidine kinase ZraS, found in Escherichia coli (strain K12).